Consider the following 283-residue polypeptide: Ribosome biogenesis GTPase A (283 aa).

The CP-type G domain occupies 14–178 (RREVTEKLKL…LLDTPGILWP (165 aa)). GTP contacts are provided by residues 58 to 61 (NKAD), 86 to 87 (NS), 130 to 135 (NVGKST), and G174.

It belongs to the TRAFAC class YlqF/YawG GTPase family. MTG1 subfamily. Interacts with ctc. Interacts with the immature 50S ribosome subunit. 2 molecules of rbgA bind to one 50S subunit.

The protein resides in the cytoplasm. In terms of biological role, essential protein that is required for a late step of 50S ribosomal subunit assembly. Has GTPase activity that is stimulated by interaction with the immature 50S ribosome subunit. Binds to the 23S rRNA. Required for the association of ribosomal proteins rplP and rpmA with the large subunit. This Bacillus licheniformis (strain ATCC 14580 / DSM 13 / JCM 2505 / CCUG 7422 / NBRC 12200 / NCIMB 9375 / NCTC 10341 / NRRL NRS-1264 / Gibson 46) protein is Ribosome biogenesis GTPase A.